The chain runs to 320 residues: 7-acetyl-epi-neemfruitin B aldo-keto reductase (320 aa).

Aspartate 51 contributes to the NADP(+) binding site. Tyrosine 56 functions as the Proton donor in the catalytic mechanism. NADP(+) contacts are provided by residues glutamine 186 and 264–272; that span reads FNKQRMEEN.

The protein belongs to the aldo/keto reductase family. Mainly expressed in petioles and, to a lower extent, in roots.

It carries out the reaction 7-acetyl-epi-neemfruitin B + AH2 + H2O = (1S,3bR,4R,5aR,9aR,9bR,11aS)-1-[(4R)-5-[(2S)-3,3-dimethyloxiran-2-yl]-1,4-dihydroxybutan-2-yl]-3b,6,6,9a,11a-pentamethyl-7-oxo-1H,2H,3bH,4H,5H,5aH,6H,7H,9aH,9bH,10H,11H,11aH-cyclopenta[a]phenanthren-4-yl acetate + acetate + A + H(+). Its pathway is secondary metabolite biosynthesis; terpenoid biosynthesis. Functionally, aldo-keto reductase involved in the biosynthesis of limonoids triterpene natural products such as azadirachtin, an antifeedant widely used as bioinsecticide, and possessing many medicinal applications including anti-tumoral, anti-malarial, anti-rheumatic, antibacterial, anti-inflammatory, anti-pyretic and diuretic effects. Can use 7-acetyl-epi-neemfruitin B as substrate. This is 7-acetyl-epi-neemfruitin B aldo-keto reductase from Melia azedarach (Chinaberry tree).